The sequence spans 194 residues: MGARECPARLLLLSLLLLPLGLPVLGAPPRLICDSRVLERYILEAKEGENATMGCAESCSFSENITVPDTKVNFYAWKRMEVQQQAMEVWQGLALLSEAILQGQALLANSSQPSEALQLHVDKAVSGLRSLTSLLRALGAQKEAIPLPDASPSSATPLRTFAVDTLCKLFRNYSNFLRGKLTLYTGEACRRRDR.

An N-terminal signal peptide occupies residues 1–26 (MGARECPARLLLLSLLLLPLGLPVLG). Disulfide bonds link C33–C189 and C55–C59. N-linked (GlcNAc...) asparagine glycosylation is present at N50. Residues N64, N109, and N172 are each glycosylated (N-linked (GlcNAc...) asparagine).

It belongs to the EPO/TPO family. As to expression, produced by kidney or liver of adult mammals and by liver of fetal or neonatal mammals.

It is found in the secreted. Its function is as follows. Hormone involved in the regulation of erythrocyte proliferation and differentiation and the maintenance of a physiological level of circulating erythrocyte mass. Binds to EPOR leading to EPOR dimerization and JAK2 activation thereby activating specific downstream effectors, including STAT1 and STAT3. This chain is Erythropoietin (EPO), found in Sus scrofa (Pig).